A 196-amino-acid polypeptide reads, in one-letter code: Nucleoid occlusion factor SlmA (196 aa).

In terms of domain architecture, HTH tetR-type spans 6-66 (RNRREEILQA…GLIEFVEDTL (61 aa)). Residues 29-48 (TTAKLAANLGVSEAALYRHF) constitute a DNA-binding region (H-T-H motif). Residues 108–135 (DALMGEHDRLRGRMEDLFNRIESSIKQI) are a coiled coil.

The protein belongs to the nucleoid occlusion factor SlmA family. Homodimer. Interacts with FtsZ.

Its subcellular location is the cytoplasm. It is found in the nucleoid. Its function is as follows. Required for nucleoid occlusion (NO) phenomenon, which prevents Z-ring formation and cell division over the nucleoid. Acts as a DNA-associated cell division inhibitor that binds simultaneously chromosomal DNA and FtsZ, and disrupts the assembly of FtsZ polymers. SlmA-DNA-binding sequences (SBS) are dispersed on non-Ter regions of the chromosome, preventing FtsZ polymerization at these regions. The chain is Nucleoid occlusion factor SlmA from Idiomarina loihiensis (strain ATCC BAA-735 / DSM 15497 / L2-TR).